The chain runs to 262 residues: Linker for activation of T-cells family member 1 (262 aa).

Over Met-1–Ala-4 the chain is Extracellular. The helical; Signal-anchor for type III membrane protein transmembrane segment at Ile-5 to Val-27 threads the bilayer. Residues Cys-26 and Cys-29 are each lipidated (S-palmitoyl cysteine). Residues His-28–Asn-262 lie on the Cytoplasmic side of the membrane. Thr-39 is subject to Phosphothreonine. 7 positions are modified to phosphoserine: Ser-40, Ser-41, Ser-43, Ser-84, Ser-101, Ser-106, and Ser-109. The disordered stretch occupies residues Ser-69 to Ala-115. Phosphotyrosine is present on residues Tyr-110, Tyr-156, Tyr-161, Tyr-200, and Tyr-220. Positions Tyr-161–Val-164 are interaction with PLCG1. 2 interaction with GRB2, GRAP2 and PIK3R1 regions span residues Tyr-200–Val-203 and Tyr-220–Val-223. Residues Ser-206–Asn-262 form a disordered region. Phosphoserine occurs at positions 224, 240, and 241. Positions Glu-243 to Pro-253 are enriched in acidic residues. A Phosphotyrosine modification is found at Tyr-255.

As to quaternary structure, when phosphorylated, interacts directly with the PIK3R1 subunit of phosphoinositide 3-kinase and the SH2 domains of GRB2, GRAP, GRAP2, PLCG1 and PLCG2. Interacts indirectly with CBL, SOS, VAV, and LCP2. Interacts with SHB, SKAP2 and CLNK. Interacts with FCGR1A. Interacts with GRB2, PLCG1 and THEMIS upon TCR activation in thymocytes. Interacts with THEMIS2. (Microbial infection) Interacts with herpes virus 1/HHV-1 protein US3; this interaction prevents the interaction between LAT and TRAF6. Phosphorylated on tyrosines by ZAP70 upon TCR activation, or by SYK upon other immunoreceptor activation; which leads to the recruitment of multiple signaling molecules. Is one of the most prominently tyrosine-phosphorylated proteins detected following TCR engagement. May be dephosphorylated by PTPRJ. Phosphorylated by ITK leading to the recruitment of VAV1 to LAT-containing complexes. Post-translationally, palmitoylation of Cys-26 and Cys-29 is required for raft targeting and efficient phosphorylation. In terms of processing, 'Lys-63'-linked ubiquitinated by TRAF6. Expressed in thymus, T-cells, NK cells, mast cells and, at lower levels, in spleen. Present in T-cells but not B-cells (at protein level).

The protein resides in the cell membrane. In terms of biological role, required for TCR (T-cell antigen receptor)- and pre-TCR-mediated signaling, both in mature T-cells and during their development. Involved in FCGR3 (low affinity immunoglobulin gamma Fc region receptor III)-mediated signaling in natural killer cells and FCER1 (high affinity immunoglobulin epsilon receptor)-mediated signaling in mast cells. Couples activation of these receptors and their associated kinases with distal intracellular events such as mobilization of intracellular calcium stores, PKC activation, MAPK activation or cytoskeletal reorganization through the recruitment of PLCG1, GRB2, GRAP2, and other signaling molecules. This is Linker for activation of T-cells family member 1 (LAT) from Homo sapiens (Human).